We begin with the raw amino-acid sequence, 965 residues long: Kinesin-like protein KIN-7K, chloroplastic (965 aa).

The interval 1 to 69 (MASRQGSKSR…PQTAQRSKEN (69 aa)) is disordered. Low complexity predominate over residues 19–28 (STASSTTSSS). Positions 29–38 (KLYQETSIDG) are enriched in polar residues. Positions 40–56 (SSPASSSAQSKQQFFSP) are enriched in low complexity. In terms of domain architecture, Kinesin motor spans 69 to 388 (NVTVTVRFRP…LKFAHRAKHI (320 aa)). Residue 149–156 (GVTSSGKT) coordinates ATP. The stretch at 389-483 (EIQAEQNKII…LTKLILVSTK (95 aa)) forms a coiled coil. Residues 551 to 561 (LLNWLKPKKRD) are compositionally biased toward basic residues. 2 disordered regions span residues 551–633 (LLNW…KMSD) and 842–888 (ATQK…ELRM). Over residues 564 to 577 (SSASDQSSVVKSNS) the composition is skewed to low complexity. The segment covering 606 to 623 (SEPREDREALEDSSHEME) has biased composition (basic and acidic residues). Coiled-coil stretches lie at residues 628–703 (SNKM…FVMT) and 738–846 (NRII…TQKS). The span at 851 to 862 (RNKTGTTTNVRN) shows a compositional bias: low complexity. Over residues 864–888 (GRRESLAKRQEHDSPSMELKRELRM) the composition is skewed to basic and acidic residues. Residues 896-931 (YEAALGEKEQREAELERILEETKQREAYLENELANM) adopt a coiled-coil conformation. The segment at 942 to 965 (QGADSEISDSISETRQTEQTEGSF) is disordered. Polar residues predominate over residues 949–965 (SDSISETRQTEQTEGSF).

It belongs to the TRAFAC class myosin-kinesin ATPase superfamily. Kinesin family. KIN-7 subfamily.

The protein localises to the plastid. Its subcellular location is the chloroplast. In Arabidopsis thaliana (Mouse-ear cress), this protein is Kinesin-like protein KIN-7K, chloroplastic.